The chain runs to 427 residues: Trigger factor (427 aa).

Positions 163 to 248 (GDTVVIDFVG…VNEVKAKELP (86 aa)) constitute a PPIase FKBP-type domain.

It belongs to the FKBP-type PPIase family. Tig subfamily.

It is found in the cytoplasm. It carries out the reaction [protein]-peptidylproline (omega=180) = [protein]-peptidylproline (omega=0). Involved in protein export. Acts as a chaperone by maintaining the newly synthesized protein in an open conformation. Functions as a peptidyl-prolyl cis-trans isomerase. This is Trigger factor (tig) from Lactococcus lactis subsp. lactis (strain IL1403) (Streptococcus lactis).